A 266-amino-acid chain; its full sequence is Glucosamine-6-phosphate deaminase (266 aa).

The active-site Proton acceptor; for enolization step is the D72. D141 functions as the For ring-opening step in the catalytic mechanism. H143 (proton acceptor; for ring-opening step) is an active-site residue. E148 serves as the catalytic For ring-opening step.

This sequence belongs to the glucosamine/galactosamine-6-phosphate isomerase family. NagB subfamily. Homohexamer.

It carries out the reaction alpha-D-glucosamine 6-phosphate + H2O = beta-D-fructose 6-phosphate + NH4(+). It functions in the pathway amino-sugar metabolism; N-acetylneuraminate degradation; D-fructose 6-phosphate from N-acetylneuraminate: step 5/5. Its activity is regulated as follows. Allosterically activated by N-acetylglucosamine 6-phosphate (GlcNAc6P). In terms of biological role, catalyzes the reversible isomerization-deamination of glucosamine 6-phosphate (GlcN6P) to form fructose 6-phosphate (Fru6P) and ammonium ion. This is Glucosamine-6-phosphate deaminase from Aliivibrio salmonicida (strain LFI1238) (Vibrio salmonicida (strain LFI1238)).